The chain runs to 237 residues: tRNA (guanine-N(7)-)-methyltransferase (237 aa).

Positions 65, 90, 117, and 140 each coordinate S-adenosyl-L-methionine. The active site involves D140. Substrate-binding positions include K144, D176, and 212 to 215; that span reads TKFE. The segment at 197–217 is disordered; it reads TCGPRQFSPRGERPETKFERR. Over residues 206-217 the composition is skewed to basic and acidic residues; that stretch reads RGERPETKFERR.

The protein belongs to the class I-like SAM-binding methyltransferase superfamily. TrmB family.

The catalysed reaction is guanosine(46) in tRNA + S-adenosyl-L-methionine = N(7)-methylguanosine(46) in tRNA + S-adenosyl-L-homocysteine. The protein operates within tRNA modification; N(7)-methylguanine-tRNA biosynthesis. Its function is as follows. Catalyzes the formation of N(7)-methylguanine at position 46 (m7G46) in tRNA. This chain is tRNA (guanine-N(7)-)-methyltransferase, found in Alkalilimnicola ehrlichii (strain ATCC BAA-1101 / DSM 17681 / MLHE-1).